The following is a 363-amino-acid chain: GDSL esterase/lipase At2g24560 (363 aa).

Residues 1-22 form the signal peptide; the sequence is MSTSKTITFTLFIAALLSSCDA. Asn-25 is a glycosylation site (N-linked (GlcNAc...) asparagine). Ser-41 functions as the Nucleophile in the catalytic mechanism. Asn-103 and Asn-325 each carry an N-linked (GlcNAc...) asparagine glycan. Active-site residues include Asp-333 and His-336.

It belongs to the 'GDSL' lipolytic enzyme family.

It is found in the secreted. The chain is GDSL esterase/lipase At2g24560 from Arabidopsis thaliana (Mouse-ear cress).